A 429-amino-acid polypeptide reads, in one-letter code: Saccharopine dehydrogenase-like oxidoreductase (429 aa).

Residue Ala-2 is modified to N-acetylalanine. Phosphoserine is present on Ser-217.

It belongs to the saccharopine dehydrogenase family.

The chain is Saccharopine dehydrogenase-like oxidoreductase (SCCPDH) from Pongo abelii (Sumatran orangutan).